A 352-amino-acid polypeptide reads, in one-letter code: Small ribosomal subunit biogenesis GTPase RsgA (352 aa).

Over residues 1–11 the composition is skewed to basic residues; the sequence is MTKRKLSKGQQ. The tract at residues 1 to 35 is disordered; sequence MTKRKLSKGQQRRVQENHKKRLQSKEKKNHVELDD. Residues 13–33 show a composition bias toward basic and acidic residues; the sequence is RVQENHKKRLQSKEKKNHVEL. A CP-type G domain is found at 114-276; it reads YYDGIKPIAA…VIDSPGVREF (163 aa). Residues 162–165 and 216–224 contribute to the GTP site; these read NKVD and GQSGVGKSS. Zn(2+) contacts are provided by C300, C305, H307, and C313.

This sequence belongs to the TRAFAC class YlqF/YawG GTPase family. RsgA subfamily. In terms of assembly, monomer. Associates with 30S ribosomal subunit, binds 16S rRNA. Zn(2+) is required as a cofactor.

It localises to the cytoplasm. Its function is as follows. One of several proteins that assist in the late maturation steps of the functional core of the 30S ribosomal subunit. Helps release RbfA from mature subunits. May play a role in the assembly of ribosomal proteins into the subunit. Circularly permuted GTPase that catalyzes slow GTP hydrolysis, GTPase activity is stimulated by the 30S ribosomal subunit. This chain is Small ribosomal subunit biogenesis GTPase RsgA, found in Proteus mirabilis (strain HI4320).